An 84-amino-acid chain; its full sequence is Beta-cardiotoxin CTX9 (84 aa).

Residues 1-21 (MKTLLLTLVVVTIVCLDLGYT) form the signal peptide. 4 disulfides stabilise this stretch: cysteine 24–cysteine 43, cysteine 36–cysteine 61, cysteine 65–cysteine 76, and cysteine 77–cysteine 82.

It belongs to the three-finger toxin family. Short-chain subfamily. Aminergic toxin sub-subfamily. In terms of tissue distribution, expressed by the venom gland.

It is found in the secreted. Functionally, acts as a beta-blocker by binding to beta-1 and beta-2 adrenergic receptors (ADRB1 and ADRB2). It dose-dependently decreases the heart rate (bradycardia), whereas conventional cardiotoxins increases it. At 100 mg/kg, intraperitoneal injection into mice provokes labored breathing, impaired locomotion, lack of response to external stimuli, and death (after 30 minutes). The sequence is that of Beta-cardiotoxin CTX9 from Ophiophagus hannah (King cobra).